Here is a 295-residue protein sequence, read N- to C-terminus: 33 kDa chaperonin (295 aa).

2 cysteine pairs are disulfide-bonded: cysteine 230–cysteine 232 and cysteine 264–cysteine 267.

Belongs to the HSP33 family. In terms of processing, under oxidizing conditions two disulfide bonds are formed involving the reactive cysteines. Under reducing conditions zinc is bound to the reactive cysteines and the protein is inactive.

It is found in the cytoplasm. Redox regulated molecular chaperone. Protects both thermally unfolding and oxidatively damaged proteins from irreversible aggregation. Plays an important role in the bacterial defense system toward oxidative stress. The polypeptide is 33 kDa chaperonin (Ectopseudomonas mendocina (strain ymp) (Pseudomonas mendocina)).